A 237-amino-acid chain; its full sequence is Ribonuclease PH (237 aa).

Residues R86 and 124–126 each bind phosphate; that span reads GTR.

This sequence belongs to the RNase PH family. In terms of assembly, homohexameric ring arranged as a trimer of dimers.

The enzyme catalyses tRNA(n+1) + phosphate = tRNA(n) + a ribonucleoside 5'-diphosphate. In terms of biological role, phosphorolytic 3'-5' exoribonuclease that plays an important role in tRNA 3'-end maturation. Removes nucleotide residues following the 3'-CCA terminus of tRNAs; can also add nucleotides to the ends of RNA molecules by using nucleoside diphosphates as substrates, but this may not be physiologically important. Probably plays a role in initiation of 16S rRNA degradation (leading to ribosome degradation) during starvation. The sequence is that of Ribonuclease PH from Idiomarina loihiensis (strain ATCC BAA-735 / DSM 15497 / L2-TR).